Here is a 153-residue protein sequence, read N- to C-terminus: Histone H2B.4 (153 aa).

2 stretches are compositionally biased toward basic and acidic residues: residues M1 to A10 and A20 to K54. The tract at residues M1–K60 is disordered. N6-acetyllysine occurs at positions 41 and 42. A Glycyl lysine isopeptide (Lys-Gly) (interchain with G-Cter in ubiquitin) cross-link involves residue K149.

The protein belongs to the histone H2B family. As to quaternary structure, the nucleosome is a histone octamer containing two molecules each of H2A, H2B, H3 and H4 assembled in one H3-H4 heterotetramer and two H2A-H2B heterodimers. The octamer wraps approximately 147 bp of DNA. Post-translationally, the N-terminus is blocked. In terms of processing, can be acetylated to form H2BK33ac and H2BK34ac. Acetylated mainly on the ubiquitinated form. Monoubiquitinated to form H2BK143ub1; which is increased during the light period and may give a specific tag for epigenetic transcriptional activation.

The protein localises to the nucleus. It is found in the chromosome. Its function is as follows. Core component of nucleosome. Nucleosomes wrap and compact DNA into chromatin, limiting DNA accessibility to the cellular machineries which require DNA as a template. Histones thereby play a central role in transcription regulation, DNA repair, DNA replication and chromosomal stability. DNA accessibility is regulated via a complex set of post-translational modifications of histones, also called histone code, and nucleosome remodeling. The chain is Histone H2B.4 from Chlamydomonas reinhardtii (Chlamydomonas smithii).